We begin with the raw amino-acid sequence, 330 residues long: MDFTPNSAINHLNLKFDDVPVSDDFSKDDLAEQLNVFTNPYFLDLEPSSMLSEGYYGFVSQPSGSSNSNKQEKNVQQQNPEKISTLQQVKEEEVSNTFSAPLNATGNFSSANPASIDLAYLDLQKLLTLPDHSKETQEKTSSQRELFEQKSSVASASKDNVSSSSILQGSASSKLLPDQSARQHQVLVGQTAIPTSEASSSINNTPLQAPVSSFADQNAFTNPLSTFASPDLASVSSPSLSSYKGAQSPNANSKRTKATSAIRTAAEEDKRRRNTAASARFRIKKKLKEQQLERTAKELTEKVAILETRVRELEMENNWLKGLIRPTSNF.

The segment covering Ser133–Glu148 has biased composition (basic and acidic residues). Disordered regions lie at residues Ser133 to Ser165 and Pro238 to Ala277. Residues Lys150 to Ser165 show a composition bias toward low complexity. Polar residues predominate over residues Lys244–Ile262. A bZIP domain is found at Thr264–Thr327. Residues Lys270–Lys288 form a basic motif region. Residues Leu292–Leu320 are leucine-zipper.

Belongs to the bZIP family. Interacts with pof1.

Its subcellular location is the nucleus. Mediates cell growth arrest in response to cadmium exposure, which is essential to maintain cell viability. Regulates cadmium stress specific genes. The protein is Transcription factor zip1 (zip1) of Schizosaccharomyces pombe (strain 972 / ATCC 24843) (Fission yeast).